The primary structure comprises 282 residues: Phosphatidylserine decarboxylase proenzyme (282 aa).

Catalysis depends on charge relay system; for autoendoproteolytic cleavage activity residues D85, H142, and S244. S244 functions as the Schiff-base intermediate with substrate; via pyruvic acid; for decarboxylase activity in the catalytic mechanism. S244 bears the Pyruvic acid (Ser); by autocatalysis mark.

Belongs to the phosphatidylserine decarboxylase family. PSD-B subfamily. Prokaryotic type I sub-subfamily. Heterodimer of a large membrane-associated beta subunit and a small pyruvoyl-containing alpha subunit. It depends on pyruvate as a cofactor. Post-translationally, is synthesized initially as an inactive proenzyme. Formation of the active enzyme involves a self-maturation process in which the active site pyruvoyl group is generated from an internal serine residue via an autocatalytic post-translational modification. Two non-identical subunits are generated from the proenzyme in this reaction, and the pyruvate is formed at the N-terminus of the alpha chain, which is derived from the carboxyl end of the proenzyme. The autoendoproteolytic cleavage occurs by a canonical serine protease mechanism, in which the side chain hydroxyl group of the serine supplies its oxygen atom to form the C-terminus of the beta chain, while the remainder of the serine residue undergoes an oxidative deamination to produce ammonia and the pyruvoyl prosthetic group on the alpha chain. During this reaction, the Ser that is part of the protease active site of the proenzyme becomes the pyruvoyl prosthetic group, which constitutes an essential element of the active site of the mature decarboxylase.

It localises to the cell membrane. It catalyses the reaction a 1,2-diacyl-sn-glycero-3-phospho-L-serine + H(+) = a 1,2-diacyl-sn-glycero-3-phosphoethanolamine + CO2. It functions in the pathway phospholipid metabolism; phosphatidylethanolamine biosynthesis; phosphatidylethanolamine from CDP-diacylglycerol: step 2/2. Its function is as follows. Catalyzes the formation of phosphatidylethanolamine (PtdEtn) from phosphatidylserine (PtdSer). This chain is Phosphatidylserine decarboxylase proenzyme, found in Coxiella burnetii (strain Dugway 5J108-111).